We begin with the raw amino-acid sequence, 118 residues long: MHKEQLMKLHQFFVYVVKEIMDDNLENTDNECKKLFKIYEMLDIRPHHIHRLKSEQKAAILLLSACVASYLANNMDNVPKNLAKKLEENAFKHLNSCKKNIIILEENENNGESAEKEE.

The protein belongs to the UPF0058 family.

This is UPF0058 protein MJ1132 from Methanocaldococcus jannaschii (strain ATCC 43067 / DSM 2661 / JAL-1 / JCM 10045 / NBRC 100440) (Methanococcus jannaschii).